The primary structure comprises 524 residues: GMP synthase [glutamine-hydrolyzing] (524 aa).

The Glutamine amidotransferase type-1 domain occupies 8 to 206; sequence KILILDFGSQ…VRKLCQCEAR (199 aa). C85 serves as the catalytic Nucleophile. Residues H180 and E182 contribute to the active site. The GMPS ATP-PPase domain occupies 207–399; that stretch reads WTTGNIVEDA…LGLPYEMVYR (193 aa). 234 to 240 contacts ATP; sequence SGGVDSS.

Homodimer.

The catalysed reaction is XMP + L-glutamine + ATP + H2O = GMP + L-glutamate + AMP + diphosphate + 2 H(+). Its pathway is purine metabolism; GMP biosynthesis; GMP from XMP (L-Gln route): step 1/1. Its function is as follows. Catalyzes the synthesis of GMP from XMP. This chain is GMP synthase [glutamine-hydrolyzing], found in Methylococcus capsulatus (strain ATCC 33009 / NCIMB 11132 / Bath).